The primary structure comprises 355 residues: Probable dual-specificity RNA methyltransferase RlmN 1 (355 aa).

Catalysis depends on Glu91, which acts as the Proton acceptor. Positions 99 to 336 (RADRAAGCLS…THLRRSRGPD (238 aa)) constitute a Radical SAM core domain. An intrachain disulfide couples Cys106 to Cys341. The [4Fe-4S] cluster site is built by Cys113, Cys117, and Cys120. S-adenosyl-L-methionine-binding positions include 163–164 (GE), Ser195, 218–220 (SLH), and Asn294. The active-site S-methylcysteine intermediate is the Cys341.

Belongs to the radical SAM superfamily. RlmN family. The cofactor is [4Fe-4S] cluster.

The protein resides in the cytoplasm. The enzyme catalyses adenosine(2503) in 23S rRNA + 2 reduced [2Fe-2S]-[ferredoxin] + 2 S-adenosyl-L-methionine = 2-methyladenosine(2503) in 23S rRNA + 5'-deoxyadenosine + L-methionine + 2 oxidized [2Fe-2S]-[ferredoxin] + S-adenosyl-L-homocysteine. It carries out the reaction adenosine(37) in tRNA + 2 reduced [2Fe-2S]-[ferredoxin] + 2 S-adenosyl-L-methionine = 2-methyladenosine(37) in tRNA + 5'-deoxyadenosine + L-methionine + 2 oxidized [2Fe-2S]-[ferredoxin] + S-adenosyl-L-homocysteine. In terms of biological role, specifically methylates position 2 of adenine 2503 in 23S rRNA and position 2 of adenine 37 in tRNAs. In Opitutus terrae (strain DSM 11246 / JCM 15787 / PB90-1), this protein is Probable dual-specificity RNA methyltransferase RlmN 1.